A 248-amino-acid chain; its full sequence is UPF0651 protein YPL107W, mitochondrial (248 aa).

The N-terminal 26 residues, 1-26 (MIRNQGWSLLYRIYPVRRFTRYSRVD), are a transit peptide targeting the mitochondrion. Residues 69-116 (KKIAGVQVPAKPQEPDNCCMSGCVNCVWEIYSEDLRDWKHRRKEAAEK) form the Oxidoreductase-like domain.

The protein belongs to the UPF0651 family.

Its subcellular location is the mitochondrion. In Saccharomyces cerevisiae (strain ATCC 204508 / S288c) (Baker's yeast), this protein is UPF0651 protein YPL107W, mitochondrial.